The following is a 267-amino-acid chain: Regulatory protein VirG (267 aa).

The Response regulatory domain maps to 29-143; sequence HVLLVDDDVA…EFLARIRVAL (115 aa). Asp78 carries the post-translational modification 4-aspartylphosphate. Positions 155 to 255 form a DNA-binding region, ompR/PhoB-type; the sequence is RRSFCFTDWT…ARGAGYFFDA (101 aa).

Post-translationally, phosphorylated by wide host range (WHR) VirA protein.

Its subcellular location is the cytoplasm. Its function is as follows. VirG is required for the positive regulation of at least two vir loci encoded by the Ti plasmid of A.tumefaciens. The protein is Regulatory protein VirG (virG) of Rhizobium radiobacter (Agrobacterium tumefaciens).